The sequence spans 509 residues: MNTATTTDNNAVRKHDVRKELFVDGYEVVIGIEIHCQLNTESKIFSSAPTDFGHEPNSQASIVDLGLPGVLPVLNAGVVDRALKFGIGVNAELGLFNTFDRKNYFYPDLPKGYQITQMANPIVGEGYIDVVVNEGEKNEYPKRMGITRAHLEEDAGKSVHDAVDGMTGVDLNRAGTPLIEIVSEPDMRSAHEALAYIKAIHQLVTWLGISDAIMAEGSFRCDCNVSIRKPGAELGTRTELKNLNSFRFIERAINREIERQIDILEDGGKVVQATMLYDPERDETRVMRTKEDANDYRYFPDPDLLPVRIEQHTVDSIRAAMPELPVARRARFEEALGLSEYDARILTGSRQIADYFENVVAEVGQADAKMAANWVMGDLLGALNKDDKEITDSPISAKQLAGMLSRIKDDTLSGKLAKKVFSALYEREGGDADDAADKIIEEKGLKQETDTGAIKAIVEDVIAKNAAMVEEYRGGKEKAFNGLVGQVMKASRGSANPQQVNQILKELLG.

This sequence belongs to the GatB/GatE family. GatB subfamily. Heterotrimer of A, B and C subunits.

It carries out the reaction L-glutamyl-tRNA(Gln) + L-glutamine + ATP + H2O = L-glutaminyl-tRNA(Gln) + L-glutamate + ADP + phosphate + H(+). The catalysed reaction is L-aspartyl-tRNA(Asn) + L-glutamine + ATP + H2O = L-asparaginyl-tRNA(Asn) + L-glutamate + ADP + phosphate + 2 H(+). In terms of biological role, allows the formation of correctly charged Asn-tRNA(Asn) or Gln-tRNA(Gln) through the transamidation of misacylated Asp-tRNA(Asn) or Glu-tRNA(Gln) in organisms which lack either or both of asparaginyl-tRNA or glutaminyl-tRNA synthetases. The reaction takes place in the presence of glutamine and ATP through an activated phospho-Asp-tRNA(Asn) or phospho-Glu-tRNA(Gln). The polypeptide is Aspartyl/glutamyl-tRNA(Asn/Gln) amidotransferase subunit B (Psychrobacter cryohalolentis (strain ATCC BAA-1226 / DSM 17306 / VKM B-2378 / K5)).